Consider the following 103-residue polypeptide: Large ribosomal subunit protein eL14 (103 aa).

Belongs to the eukaryotic ribosomal protein eL14 family.

This is Large ribosomal subunit protein eL14 from Pyrobaculum calidifontis (strain DSM 21063 / JCM 11548 / VA1).